We begin with the raw amino-acid sequence, 287 residues long: MTDSTLYLIKAFFLGIIEGLTEFIPVSSTGHLILIGDWINFTSSSGKVFEVVIQFGSILAVMWIFRARLWQLIRGTLTGVPAETAFTRNLLLAFLPAAVVGAIFIKTIKQVFYHPGVVAVTLVLGGLIMLWVERKTHHTPGDAPGAADDTASDERASAHTLEQISWKQALGVGVAQCLAMVPGTSRSGATIIGGMIAGIQRKTATEFSFFLAMPTMLGAATYDLYRNIDLLSQHDLSAIAVGFAAAFISALVVVRAVLRFVANHTYRGFAWYRIALGIVVAAWLMTK.

7 helical membrane-spanning segments follow: residues 6-26, 45-65, 85-105, 111-131, 204-224, 238-258, and 265-285; these read LYLI…FIPV, SGKV…MWIF, AFTR…AIFI, VFYH…IMLW, ATEF…TYDL, AIAV…RAVL, and TYRG…AWLM.

It belongs to the UppP family.

It is found in the cell inner membrane. It carries out the reaction di-trans,octa-cis-undecaprenyl diphosphate + H2O = di-trans,octa-cis-undecaprenyl phosphate + phosphate + H(+). Catalyzes the dephosphorylation of undecaprenyl diphosphate (UPP). Confers resistance to bacitracin. This is Undecaprenyl-diphosphatase from Bordetella petrii (strain ATCC BAA-461 / DSM 12804 / CCUG 43448).